Consider the following 233-residue polypeptide: Probable fimbrial chaperone protein ElfD (233 aa).

The first 26 residues, 1–26 (MKTCITKGIVTVSLTAILLSCSSAWA), serve as a signal peptide directing secretion.

This sequence belongs to the periplasmic pilus chaperone family.

It is found in the periplasm. Its function is as follows. Part of the elfADCG-ycbUVF fimbrial operon, which promotes adhesion of bacteria to different abiotic surfaces. Could be required for the biogenesis of the ElfA fimbriae. This Escherichia coli (strain K12) protein is Probable fimbrial chaperone protein ElfD (elfD).